The chain runs to 512 residues: MADQLIIFDTTLRDGEQSPGASMNKDEKLRIARQLERLKVDVIEAGFAASSNGDFEAVQGIARAIKDSTICSLSRANDRDISRAAEALKGANRSRIHTFIATSALHMEKKLRMTPDQVFEQAKLAVRFARNLVADVEFSPEDAYRSDEDFLCRVIEAAINEGATTINVPDTVGYAIPELYGTFIKTLRERVPNSDKAIWSVHCHNDLGMAVANSLAGVKIGGARQVECTINGLGERAGNCSLEEVVMAVKTRRDYFGLDVDIETQHILAASRMVSQITGFVVQPNKAIVGANAFAHAAGIHQDGVLKARDTYEIMRAEDVGWSANKIVLSKVSGRNAFKQRLQDLGAQMESESDVNAAFARFKELADRKSEIFDEDILALVGSESVAREKEQYSFVSLSQHSETGERPQASIVFTADGKEVKSSSDGDGPVDASLKAIEAQVKSGAEMVLYSVNAISGSTESQGEVTVRLQHGGRVVNGVGADPDIIVASAKAYLSALSKLHSKADRVAAQG.

The Pyruvate carboxyltransferase domain occupies 5–268; it reads LIIFDTTLRD…DVDIETQHIL (264 aa). Positions 14, 202, 204, and 239 each coordinate Mn(2+). The tract at residues 394–512 is regulatory domain; the sequence is SFVSLSQHSE…SKADRVAAQG (119 aa).

Belongs to the alpha-IPM synthase/homocitrate synthase family. LeuA type 1 subfamily. In terms of assembly, homodimer. Mn(2+) is required as a cofactor.

Its subcellular location is the cytoplasm. The catalysed reaction is 3-methyl-2-oxobutanoate + acetyl-CoA + H2O = (2S)-2-isopropylmalate + CoA + H(+). It functions in the pathway amino-acid biosynthesis; L-leucine biosynthesis; L-leucine from 3-methyl-2-oxobutanoate: step 1/4. In terms of biological role, catalyzes the condensation of the acetyl group of acetyl-CoA with 3-methyl-2-oxobutanoate (2-ketoisovalerate) to form 3-carboxy-3-hydroxy-4-methylpentanoate (2-isopropylmalate). The chain is 2-isopropylmalate synthase from Albidiferax ferrireducens (strain ATCC BAA-621 / DSM 15236 / T118) (Rhodoferax ferrireducens).